A 238-amino-acid polypeptide reads, in one-letter code: Purine nucleoside phosphorylase DeoD-type (238 aa).

His-5 is an a purine D-ribonucleoside binding site. Phosphate is bound by residues Gly-21, Arg-25, Arg-44, and 88–91 (RVGS). Residues 180-182 (EME) and 204-205 (SD) each bind a purine D-ribonucleoside. Residue Asp-205 is the Proton donor of the active site.

This sequence belongs to the PNP/UDP phosphorylase family. As to quaternary structure, homohexamer; trimer of homodimers.

The enzyme catalyses a purine D-ribonucleoside + phosphate = a purine nucleobase + alpha-D-ribose 1-phosphate. It catalyses the reaction a purine 2'-deoxy-D-ribonucleoside + phosphate = a purine nucleobase + 2-deoxy-alpha-D-ribose 1-phosphate. In terms of biological role, catalyzes the reversible phosphorolytic breakdown of the N-glycosidic bond in the beta-(deoxy)ribonucleoside molecules, with the formation of the corresponding free purine bases and pentose-1-phosphate. This is Purine nucleoside phosphorylase DeoD-type from Proteus mirabilis (strain HI4320).